The primary structure comprises 89 residues: C-C motif chemokine 18 (89 aa).

A signal peptide spans 1-20 (MKGLAAALLVLVCTMALCSC). Intrachain disulfides connect cysteine 30–cysteine 54 and cysteine 31–cysteine 70.

Belongs to the intercrine beta (chemokine CC) family. In terms of processing, the Cys-30/Cys-54 disulfide bond is required for activity. Expressed at high levels in lung, lymph nodes, placenta, bone marrow, dendritic cells present in germinal centers and T-cell areas of secondary lymphoid organs and macrophages derived from peripheral blood monocytes. Not expressed by peripheral blood monocytes and a monocyte-to-macrophage differentiation is a prerequisite for expression. Expressed in synovial fluids from patients with rheumatoid and septic arthritis and in ovarian carcinoma ascitic fluid.

It localises to the secreted. In terms of biological role, chemotactic factor that attracts lymphocytes but not monocytes or granulocytes. May be involved in B-cell migration into B-cell follicles in lymph nodes. Attracts naive T-lymphocytes toward dendritic cells and activated macrophages in lymph nodes, has chemotactic activity for naive T-cells, CD4+ and CD8+ T-cells and thus may play a role in both humoral and cell-mediated immunity responses. The chain is C-C motif chemokine 18 (CCL18) from Homo sapiens (Human).